The primary structure comprises 365 residues: tRNA/tmRNA (uracil-C(5))-methyltransferase (365 aa).

Residues Gln189, Tyr217, Asn222, Glu238, and Asp298 each contribute to the S-adenosyl-L-methionine site. Cys323 acts as the Nucleophile in catalysis. Residue Glu357 is the Proton acceptor of the active site.

Belongs to the class I-like SAM-binding methyltransferase superfamily. RNA M5U methyltransferase family. TrmA subfamily.

It catalyses the reaction uridine(54) in tRNA + S-adenosyl-L-methionine = 5-methyluridine(54) in tRNA + S-adenosyl-L-homocysteine + H(+). The catalysed reaction is uridine(341) in tmRNA + S-adenosyl-L-methionine = 5-methyluridine(341) in tmRNA + S-adenosyl-L-homocysteine + H(+). Dual-specificity methyltransferase that catalyzes the formation of 5-methyluridine at position 54 (m5U54) in all tRNAs, and that of position 341 (m5U341) in tmRNA (transfer-mRNA). This chain is tRNA/tmRNA (uracil-C(5))-methyltransferase, found in Shewanella baltica (strain OS155 / ATCC BAA-1091).